Reading from the N-terminus, the 426-residue chain is Serine--tRNA ligase (426 aa).

The interval 44 to 67 is disordered; that stretch reads TEKQALQSERNATSKQIGMLKKKG. Over residues 47 to 59 the composition is skewed to polar residues; that stretch reads QALQSERNATSKQ. 231 to 233 contacts L-serine; it reads TAE. ATP is bound by residues 262-264 and Val-278; that span reads RRE. Glu-285 lines the L-serine pocket. 349–352 serves as a coordination point for ATP; that stretch reads EVSS. L-serine is bound at residue Ser-384.

The protein belongs to the class-II aminoacyl-tRNA synthetase family. Type-1 seryl-tRNA synthetase subfamily. As to quaternary structure, homodimer. The tRNA molecule binds across the dimer.

Its subcellular location is the cytoplasm. The catalysed reaction is tRNA(Ser) + L-serine + ATP = L-seryl-tRNA(Ser) + AMP + diphosphate + H(+). It catalyses the reaction tRNA(Sec) + L-serine + ATP = L-seryl-tRNA(Sec) + AMP + diphosphate + H(+). The protein operates within aminoacyl-tRNA biosynthesis; selenocysteinyl-tRNA(Sec) biosynthesis; L-seryl-tRNA(Sec) from L-serine and tRNA(Sec): step 1/1. Functionally, catalyzes the attachment of serine to tRNA(Ser). Is also able to aminoacylate tRNA(Sec) with serine, to form the misacylated tRNA L-seryl-tRNA(Sec), which will be further converted into selenocysteinyl-tRNA(Sec). This is Serine--tRNA ligase from Akkermansia muciniphila (strain ATCC BAA-835 / DSM 22959 / JCM 33894 / BCRC 81048 / CCUG 64013 / CIP 107961 / Muc).